The primary structure comprises 355 residues: Chorismate synthase (355 aa).

An NADP(+)-binding site is contributed by Arg-48. Residues 125–127 (RSS), 239–240 (NA), Gly-280, 295–299 (KPVAT), and Arg-321 each bind FMN.

It belongs to the chorismate synthase family. In terms of assembly, homotetramer. FMNH2 serves as cofactor.

The catalysed reaction is 5-O-(1-carboxyvinyl)-3-phosphoshikimate = chorismate + phosphate. Its pathway is metabolic intermediate biosynthesis; chorismate biosynthesis; chorismate from D-erythrose 4-phosphate and phosphoenolpyruvate: step 7/7. Functionally, catalyzes the anti-1,4-elimination of the C-3 phosphate and the C-6 proR hydrogen from 5-enolpyruvylshikimate-3-phosphate (EPSP) to yield chorismate, which is the branch point compound that serves as the starting substrate for the three terminal pathways of aromatic amino acid biosynthesis. This reaction introduces a second double bond into the aromatic ring system. The chain is Chorismate synthase from Flavobacterium psychrophilum (strain ATCC 49511 / DSM 21280 / CIP 103535 / JIP02/86).